The primary structure comprises 424 residues: Synaptotagmin-1 (424 aa).

Residues 1 to 60 (MVSESHHEALAAPPATTVAAALPSNVTEPAAPGGGGGKEDAFSNLKKKFMNELNKIPLPP) lie on the Vesicular side of the membrane. A glycan (N-linked (GlcNAc...) asparagine) is linked at asparagine 25. Residues 61–82 (WALIAIAIVAVLLILTCCFCLC) traverse the membrane as a helical segment. 5 S-palmitoyl cysteine lipidation sites follow: cysteine 77, cysteine 78, cysteine 80, cysteine 82, and cysteine 85. Over 83-424 (KKCLFKKKNK…EVDAMLAVKK (342 aa)) the chain is Cytoplasmic. The tract at residues 117–142 (KDQALKDDDAETGLTDGEEKEEPKEV) is disordered. Residues 124–136 (DDAETGLTDGEEK) are compositionally biased toward acidic residues. The interval 138–384 (EPKEVEKLGK…AIGKVFVGYN (247 aa)) is phospholipid binding. 2 consecutive C2 domains span residues 144–263 (KLGK…EEWR) and 275–408 (KLGD…AQWH). Residues leucine 174, aspartate 175, aspartate 181, aspartate 233, phenylalanine 234, aspartate 235, serine 238, lysine 239, aspartate 241, aspartate 306, aspartate 312, aspartate 366, aspartate 368, and aspartate 374 each coordinate Ca(2+).

It belongs to the synaptotagmin family. Homotetramer. The cofactor is Ca(2+).

The protein localises to the cytoplasmic vesicle. It localises to the secretory vesicle membrane. Its subcellular location is the secretory vesicle. The protein resides in the synaptic vesicle membrane. It is found in the chromaffin granule membrane. The protein localises to the cytoplasm. Its function is as follows. Calcium sensor that participates in triggering neurotransmitter release at the synapse. May have a regulatory role in the membrane interactions during trafficking of synaptic vesicles at the active zone of the synapse. It binds acidic phospholipids with a specificity that requires the presence of both an acidic head group and a diacyl backbone. May play a role in dendrite formation by melanocytes. This is Synaptotagmin-1 (SYT1) from Gallus gallus (Chicken).